The following is a 357-amino-acid chain: Embryonic growth/differentiation factor 1 (357 aa).

Positions 1–23 are cleaved as a signal peptide; that stretch reads MLPVCHRFCDHLLLLLLLPSTTL. The propeptide occupies 24-237; that stretch reads APAPASMGPA…RLCPLPRLRR (214 aa). The N-linked (GlcNAc...) asparagine glycan is linked to Asn191. 3 cysteine pairs are disulfide-bonded: Cys251/Cys322, Cys280/Cys354, and Cys284/Cys356.

Belongs to the TGF-beta family. Homodimer; disulfide-linked. As to expression, expressed almost exclusively in the nervous system.

It localises to the secreted. Functionally, may mediate cell differentiation events during embryonic development. The protein is Embryonic growth/differentiation factor 1 (Gdf1) of Mus musculus (Mouse).